The chain runs to 496 residues: Cytochrome P450 monooxygenase claT (496 aa).

The helical transmembrane segment at 2–22 threads the bilayer; sequence LSLIVEATLLLVVLVLSAHYV. Residue C423 participates in heme binding.

It belongs to the cytochrome P450 family. Heme is required as a cofactor.

It is found in the membrane. It carries out the reaction wigandol + 4 reduced [NADPH--hemoprotein reductase] + 4 O2 = arnebinol A + 4 oxidized [NADPH--hemoprotein reductase] + 6 H2O + 4 H(+). The enzyme catalyses arnebinol A + reduced [NADPH--hemoprotein reductase] + O2 = clavilactone A + oxidized [NADPH--hemoprotein reductase] + H2O + H(+). The catalysed reaction is (2E)-geranylhydroquinone + reduced [NADPH--hemoprotein reductase] + O2 = isoalliodorol + oxidized [NADPH--hemoprotein reductase] + H2O + H(+). It participates in secondary metabolite biosynthesis; terpenoid biosynthesis. Functionally, cytochrome P450 monooxygenase; part of the gene cluster that mediates the biosynthesis of clavilactone A, a meroterpenoid that features a unique benzo-fused ten-membered carbocyclic ring unit with an alpha,beta-epoxy-gamma-lactone moiety, forming an intriguing 10/5/3 tricyclic nested skeleton. ClaR, ClaS and ClaT are sufficient to produce clavilactone A. Within the pathway, claT acts as a multifunctional cytochrome P450 monooxygenase that catalyzes a ten-electron oxidation to accomplish the biosynthesis of the 10/5/3 tricyclic nested skeleton in clavilactones. The biosynthesis begins with the prenyltransferase claS that transfers geranyl pyrophosphate (GPP) to hydroquinone to produces geranylhydroquinone. The cytochrome P450 monooxygenase claR then catalyzes the diradical coupling reaction between the intramolecular hydroquinone and allyl moieties to form the benzo-fused ten-membered carbocyclic ring unit of wigantol. Finally the cytochrome P450 monooxygenase claT exquisitely and stereoselectively assembles the alpha,beta-epoxy-gamma-lactone moiety, producing clavilactone A via arnebinol A. In Ampulloclitocybe clavipes (Club foot), this protein is Cytochrome P450 monooxygenase claT.